Here is a 61-residue protein sequence, read N- to C-terminus: MVKNTDDVSVSTPAKEGIMQGNGAWCVVGFPPCKDNKCYCCIGGRTHARYSTMAECRHACF.

A disulfide bridge links Cys-38 with Cys-60.

Belongs to the MEG family. Ubiquitous.

The polypeptide is Protein MATERNALLY EXPRESSED GENE 6 (MEG6) (Zea mays (Maize)).